The sequence spans 327 residues: Pyruvate dehydrogenase E1 component subunit beta (327 aa).

Glu-60 contacts thiamine diphosphate.

Heterodimer of an alpha and a beta chain. The cofactor is thiamine diphosphate.

The enzyme catalyses N(6)-[(R)-lipoyl]-L-lysyl-[protein] + pyruvate + H(+) = N(6)-[(R)-S(8)-acetyldihydrolipoyl]-L-lysyl-[protein] + CO2. Functionally, the pyruvate dehydrogenase complex catalyzes the overall conversion of pyruvate to acetyl-CoA and CO(2). It contains multiple copies of three enzymatic components: pyruvate dehydrogenase (E1), dihydrolipoamide acetyltransferase (E2) and lipoamide dehydrogenase (E3). The sequence is that of Pyruvate dehydrogenase E1 component subunit beta (pdhB) from Acholeplasma laidlawii.